The following is a 229-amino-acid chain: Uracil-DNA glycosylase (229 aa).

Aspartate 64 acts as the Proton acceptor in catalysis.

It belongs to the uracil-DNA glycosylase (UDG) superfamily. UNG family.

It localises to the cytoplasm. The enzyme catalyses Hydrolyzes single-stranded DNA or mismatched double-stranded DNA and polynucleotides, releasing free uracil.. Excises uracil residues from the DNA which can arise as a result of misincorporation of dUMP residues by DNA polymerase or due to deamination of cytosine. The sequence is that of Uracil-DNA glycosylase from Escherichia coli O81 (strain ED1a).